Here is a 339-residue protein sequence, read N- to C-terminus: tRNA pseudouridine synthase B (339 aa).

Aspartate 40 (nucleophile) is an active-site residue. Residues 262-307 (FRRLSKFAYREEFEENTERSTAAYTLVREDANTGLTYKLPLEVELS) form the RPE1 insert domain.

It belongs to the pseudouridine synthase TruB family. Type 1 subfamily.

It carries out the reaction uridine(55) in tRNA = pseudouridine(55) in tRNA. Functionally, responsible for synthesis of pseudouridine from uracil-55 in the psi GC loop of transfer RNAs. This is tRNA pseudouridine synthase B from Rickettsia felis (strain ATCC VR-1525 / URRWXCal2) (Rickettsia azadi).